Here is a 402-residue protein sequence, read N- to C-terminus: Arginine biosynthesis bifunctional protein ArgJ (402 aa).

Residues Thr152, Lys178, Thr189, Glu275, Asn397, and Thr402 each coordinate substrate. Thr189 serves as the catalytic Nucleophile.

It belongs to the ArgJ family. In terms of assembly, heterotetramer of two alpha and two beta chains.

It is found in the cytoplasm. The enzyme catalyses N(2)-acetyl-L-ornithine + L-glutamate = N-acetyl-L-glutamate + L-ornithine. The catalysed reaction is L-glutamate + acetyl-CoA = N-acetyl-L-glutamate + CoA + H(+). Its pathway is amino-acid biosynthesis; L-arginine biosynthesis; L-ornithine and N-acetyl-L-glutamate from L-glutamate and N(2)-acetyl-L-ornithine (cyclic): step 1/1. It participates in amino-acid biosynthesis; L-arginine biosynthesis; N(2)-acetyl-L-ornithine from L-glutamate: step 1/4. Functionally, catalyzes two activities which are involved in the cyclic version of arginine biosynthesis: the synthesis of N-acetylglutamate from glutamate and acetyl-CoA as the acetyl donor, and of ornithine by transacetylation between N(2)-acetylornithine and glutamate. The sequence is that of Arginine biosynthesis bifunctional protein ArgJ from Lactiplantibacillus plantarum (strain ATCC BAA-793 / NCIMB 8826 / WCFS1) (Lactobacillus plantarum).